We begin with the raw amino-acid sequence, 378 residues long: GTP 3',8-cyclase 3 (378 aa).

One can recognise a Radical SAM core domain in the interval 40–259 (RCGRTMGDLR…STLGKKYGPI (220 aa)). Arg-49 provides a ligand contact to GTP. Cys-56 and Cys-60 together coordinate [4Fe-4S] cluster. Tyr-62 is a binding site for S-adenosyl-L-methionine. Cys-63 contributes to the [4Fe-4S] cluster binding site. Position 99 (Arg-99) interacts with GTP. Gly-103 is an S-adenosyl-L-methionine binding site. Thr-134 is a GTP binding site. Ser-158 provides a ligand contact to S-adenosyl-L-methionine. A GTP-binding site is contributed by Lys-195. Position 229 (Met-229) interacts with S-adenosyl-L-methionine. Positions 292 and 295 each coordinate [4Fe-4S] cluster. Position 297–299 (297–299 (RSR)) interacts with GTP. Cys-309 is a [4Fe-4S] cluster binding site.

It belongs to the radical SAM superfamily. MoaA family. As to quaternary structure, monomer and homodimer. The cofactor is [4Fe-4S] cluster.

It carries out the reaction GTP + AH2 + S-adenosyl-L-methionine = (8S)-3',8-cyclo-7,8-dihydroguanosine 5'-triphosphate + 5'-deoxyadenosine + L-methionine + A + H(+). It participates in cofactor biosynthesis; molybdopterin biosynthesis. Its function is as follows. Catalyzes the cyclization of GTP to (8S)-3',8-cyclo-7,8-dihydroguanosine 5'-triphosphate. The protein is GTP 3',8-cyclase 3 of Mycobacterium bovis (strain ATCC BAA-935 / AF2122/97).